The primary structure comprises 228 residues: Ribonuclease 3 (228 aa).

Residues 5-127 (LTALQERLKH…LIGAVYLDAG (123 aa)) form the RNase III domain. Residue glutamate 40 participates in Mg(2+) binding. The active site involves aspartate 44. Aspartate 113 and glutamate 116 together coordinate Mg(2+). Glutamate 116 is an active-site residue. Residues 154 to 224 (DPKTELQEWL…AAAMLIRLKA (71 aa)) enclose the DRBM domain.

This sequence belongs to the ribonuclease III family. Homodimer. The cofactor is Mg(2+).

The protein localises to the cytoplasm. The enzyme catalyses Endonucleolytic cleavage to 5'-phosphomonoester.. Its function is as follows. Digests double-stranded RNA. Involved in the processing of primary rRNA transcript to yield the immediate precursors to the large and small rRNAs (23S and 16S). Processes some mRNAs, and tRNAs when they are encoded in the rRNA operon. Processes pre-crRNA and tracrRNA of type II CRISPR loci if present in the organism. This chain is Ribonuclease 3, found in Variovorax paradoxus (strain S110).